The chain runs to 396 residues: Flavohemoprotein (396 aa).

The Globin domain occupies 1-136 (MLDNHTIAIV…LANVFIQRED (136 aa)). Residue His85 coordinates heme b. Catalysis depends on charge relay system residues Tyr95 and Glu135. A reductase region spans residues 147-396 (GGWSGVRPFR…YECFGPHKVV (250 aa)). In terms of domain architecture, FAD-binding FR-type spans 150–255 (SGVRPFRIVN…AAPHGDFFLD (106 aa)). FAD-binding positions include Tyr188 and 204 to 207 (RQYS). An NADP(+)-binding site is contributed by 268–273 (GVGQTP). Residue 389-392 (CFGP) participates in FAD binding.

This sequence belongs to the globin family. Two-domain flavohemoproteins subfamily. The protein in the C-terminal section; belongs to the flavoprotein pyridine nucleotide cytochrome reductase family. It depends on heme b as a cofactor. FAD serves as cofactor.

It carries out the reaction 2 nitric oxide + NADPH + 2 O2 = 2 nitrate + NADP(+) + H(+). The enzyme catalyses 2 nitric oxide + NADH + 2 O2 = 2 nitrate + NAD(+) + H(+). Is involved in NO detoxification in an aerobic process, termed nitric oxide dioxygenase (NOD) reaction that utilizes O(2) and NAD(P)H to convert NO to nitrate, which protects the bacterium from various noxious nitrogen compounds. Therefore, plays a central role in the inducible response to nitrosative stress. In Pectobacterium atrosepticum (strain SCRI 1043 / ATCC BAA-672) (Erwinia carotovora subsp. atroseptica), this protein is Flavohemoprotein.